The chain runs to 252 residues: Phosphate import ATP-binding protein PstB 1 (252 aa).

Positions 6-247 (LQIRDLSVYY…PKRKETEDYI (242 aa)) constitute an ABC transporter domain. 38–45 (GPSGSGKS) provides a ligand contact to ATP.

The protein belongs to the ABC transporter superfamily. Phosphate importer (TC 3.A.1.7) family. In terms of assembly, the complex is composed of two ATP-binding proteins (PstB), two transmembrane proteins (PstC and PstA) and a solute-binding protein (PstS).

It is found in the cell membrane. The catalysed reaction is phosphate(out) + ATP + H2O = ADP + 2 phosphate(in) + H(+). Functionally, part of the ABC transporter complex PstSACB involved in phosphate import. Responsible for energy coupling to the transport system. In Streptococcus pyogenes serotype M6 (strain ATCC BAA-946 / MGAS10394), this protein is Phosphate import ATP-binding protein PstB 1.